The following is a 93-amino-acid chain: Small ribosomal subunit protein uS15 (93 aa).

The protein belongs to the universal ribosomal protein uS15 family. In terms of assembly, part of the 30S ribosomal subunit. Forms a bridge to the 50S subunit in the 70S ribosome, contacting the 23S rRNA.

One of the primary rRNA binding proteins, it binds directly to 16S rRNA where it helps nucleate assembly of the platform of the 30S subunit by binding and bridging several RNA helices of the 16S rRNA. Functionally, forms an intersubunit bridge (bridge B4) with the 23S rRNA of the 50S subunit in the ribosome. The chain is Small ribosomal subunit protein uS15 from Ehrlichia ruminantium (strain Gardel).